Reading from the N-terminus, the 220-residue chain is Thiamine-phosphate synthase (220 aa).

4-amino-2-methyl-5-(diphosphooxymethyl)pyrimidine contacts are provided by residues glutamine 47 to lysine 51 and asparagine 78. Aspartate 79 and aspartate 98 together coordinate Mg(2+). Residue serine 117 participates in 4-amino-2-methyl-5-(diphosphooxymethyl)pyrimidine binding. Threonine 143–threonine 145 lines the 2-[(2R,5Z)-2-carboxy-4-methylthiazol-5(2H)-ylidene]ethyl phosphate pocket. Lysine 146 contacts 4-amino-2-methyl-5-(diphosphooxymethyl)pyrimidine. 2-[(2R,5Z)-2-carboxy-4-methylthiazol-5(2H)-ylidene]ethyl phosphate contacts are provided by residues glycine 174 and isoleucine 194–serine 195.

Belongs to the thiamine-phosphate synthase family. Requires Mg(2+) as cofactor.

It carries out the reaction 2-[(2R,5Z)-2-carboxy-4-methylthiazol-5(2H)-ylidene]ethyl phosphate + 4-amino-2-methyl-5-(diphosphooxymethyl)pyrimidine + 2 H(+) = thiamine phosphate + CO2 + diphosphate. The catalysed reaction is 2-(2-carboxy-4-methylthiazol-5-yl)ethyl phosphate + 4-amino-2-methyl-5-(diphosphooxymethyl)pyrimidine + 2 H(+) = thiamine phosphate + CO2 + diphosphate. It catalyses the reaction 4-methyl-5-(2-phosphooxyethyl)-thiazole + 4-amino-2-methyl-5-(diphosphooxymethyl)pyrimidine + H(+) = thiamine phosphate + diphosphate. It participates in cofactor biosynthesis; thiamine diphosphate biosynthesis; thiamine phosphate from 4-amino-2-methyl-5-diphosphomethylpyrimidine and 4-methyl-5-(2-phosphoethyl)-thiazole: step 1/1. Condenses 4-methyl-5-(beta-hydroxyethyl)thiazole monophosphate (THZ-P) and 2-methyl-4-amino-5-hydroxymethyl pyrimidine pyrophosphate (HMP-PP) to form thiamine monophosphate (TMP). This is Thiamine-phosphate synthase from Methanosarcina barkeri (strain Fusaro / DSM 804).